Here is a 319-residue protein sequence, read N- to C-terminus: 12-(S)-hydroxy-5,8,10,14-eicosatetraenoic acid receptor (319 aa).

At 1–16 (MPFPNCSAPSTVVATA) the chain is on the extracellular side. A glycan (N-linked (GlcNAc...) asparagine) is linked at Asn-5. Residues 17–37 (VGVLLGLECGLGLLGNAVALW) form a helical membrane-spanning segment. Topologically, residues 38 to 52 (TFLFRVRVWKPYAVY) are cytoplasmic. A helical membrane pass occupies residues 53–73 (LLNLALADLLLAACLPFLAAF). The Extracellular segment spans residues 74–91 (YLSLQAWHLGRVGCWALH). Residues 92 to 110 (FLLDLSRSVGMAFLAAVAL) traverse the membrane as a helical segment. Residues 111–131 (DRYLRVVHPRLKVNLLSPQAA) lie on the Cytoplasmic side of the membrane. A helical membrane pass occupies residues 132–152 (LGVSGLVWLLMVALTCPGLLI). Residues 153–180 (SEAAQNSTRCHSFYSRADGSFSIIWQEA) lie on the Extracellular side of the membrane. The chain crosses the membrane as a helical span at residues 181–201 (LSCLQFVLPFGLIVFCNAGII). At 202 to 219 (RALQKRLREPEKQPKLQR) the chain is on the cytoplasmic side. The helical transmembrane segment at 220–240 (AQALVTLVVVLFALCFLPCFL) threads the bilayer. The Extracellular portion of the chain corresponds to 241 to 265 (ARVLMHIFQNLGSCRALCAVAHTSD). Residues 266-284 (VTGSLTYLHSVLNPVVYCF) traverse the membrane as a helical segment. At 285 to 319 (SSPTFRSSYRRVFHTLRGKGQAAEPPDFNPRDSYS) the chain is on the cytoplasmic side.

It belongs to the G-protein coupled receptor 1 family. Interacts with KRAS; in a farnesylation-dependent manner.

The protein localises to the cell membrane. Its function is as follows. High-affinity receptor for 12-(S)-hydroxy-5,8,10,14-eicosatetraenoic acid (12-S-HETE), with much lower affinities for other HETE isomers. 12-S-HETE is a eicosanoid, a 12-lipoxygenase (ALOX12) metabolite of arachidonic acid, involved in many physiologic and pathologic processes. 12-S-HETE-binding leads to activation of ERK1/2 (MAPK3/MAPK1), MEK, and NF-kappa-B pathways leading to cell growth. Plays a crucial role for proliferation, survival and macropinocytosis of KRAS-dependent cancer cells by mediating the translocation of KRAS from the endoplasmic reticulum to the plasma membrane (PM) and its association with the PM. Contributes to enhanced immune responses by inducing dendrite protrusion of small intestinal CX3CR1(+) phagocytes for the uptake of luminal antigens. Acts also as a key receptor for 12-(S)-HETE-mediated liver ischemia reperfusion injury. Proton-sensing G protein-coupled receptor. The protein is 12-(S)-hydroxy-5,8,10,14-eicosatetraenoic acid receptor (GPR31) of Homo sapiens (Human).